The primary structure comprises 517 residues: zeta-carotene-forming phytoene desaturase (517 aa).

Position 11–44 (11–44 (VVVGAGVGGLAAAARLAHQGFDVQVFEKTQGPGG)) interacts with FAD.

The protein belongs to the carotenoid/retinoid oxidoreductase family. FAD serves as cofactor.

The catalysed reaction is 15-cis-phytoene + 2 A = all-trans-zeta-carotene + 2 AH2. Its pathway is carotenoid biosynthesis; lycopene biosynthesis. Functionally, dehydrogenates carotenes in the cis conformation: has cis-to-trans isomerase activity and mediates dehydrogenation of cis-phytoene, producing zeta-carotene via the intermediary of phytofluene by the symmetrical introduction of 2 double bonds at the C-11 and C-11' positions of phytoene. In Myxococcus xanthus, this protein is zeta-carotene-forming phytoene desaturase (carA2).